Consider the following 351-residue polypeptide: Ribosomal RNA large subunit methyltransferase M (351 aa).

S-adenosyl-L-methionine-binding positions include S183, 216 to 219 (APGG), D235, D255, and D271. The active-site Proton acceptor is the K300.

This sequence belongs to the class I-like SAM-binding methyltransferase superfamily. RNA methyltransferase RlmE family. RlmM subfamily. In terms of assembly, monomer.

It is found in the cytoplasm. It catalyses the reaction cytidine(2498) in 23S rRNA + S-adenosyl-L-methionine = 2'-O-methylcytidine(2498) in 23S rRNA + S-adenosyl-L-homocysteine + H(+). Its function is as follows. Catalyzes the 2'-O-methylation at nucleotide C2498 in 23S rRNA. This is Ribosomal RNA large subunit methyltransferase M from Ectopseudomonas mendocina (strain ymp) (Pseudomonas mendocina).